Here is a 141-residue protein sequence, read N- to C-terminus: HTH-type transcriptional repressor NsrR (141 aa).

One can recognise an HTH rrf2-type domain in the interval 2 to 129 (QLTSFTDYAL…DECTIESLLS (128 aa)). The H-T-H motif DNA-binding region spans 28-51 (ITEVTDLFGVSRNHMVKVINRLGQ). Cys-91, Cys-96, and Cys-102 together coordinate [2Fe-2S] cluster.

[2Fe-2S] cluster is required as a cofactor.

Functionally, nitric oxide-sensitive repressor of genes involved in protecting the cell against nitrosative stress. May require iron for activity. The sequence is that of HTH-type transcriptional repressor NsrR from Vibrio parahaemolyticus serotype O3:K6 (strain RIMD 2210633).